Consider the following 214-residue polypeptide: Charged multivesicular body protein 2b (214 aa).

Residues 16–55 (EQNKELRGTQRAITRDRAALEKQEKQLEMEIKKMAKAGNK) are a coiled coil. The segment at 178 to 203 (MAKAPSAAKGLPSTSASKSSGISDEE) is disordered. Positions 189–199 (PSTSASKSSGI) are enriched in polar residues. Residues 202 to 212 (EEIERQLKALG) carry the MIT-interacting motif motif.

Belongs to the SNF7 family. As to quaternary structure, probable core component of the endosomal sorting required for transport complex III (ESCRT-III). ESCRT-III components are thought to multimerize to form a flat lattice on the perimeter membrane of the endosome.

It localises to the cytoplasm. Its subcellular location is the cytosol. The protein resides in the late endosome membrane. In terms of biological role, probable core component of the endosomal sorting required for transport complex III (ESCRT-III) which is involved in multivesicular bodies (MVBs) formation and sorting of endosomal cargo proteins into MVBs. MVBs contain intraluminal vesicles (ILVs) that are generated by invagination and scission from the limiting membrane of the endosome and mostly are delivered to lysosomes enabling degradation of membrane proteins, such as stimulated growth factor receptors, lysosomal enzymes and lipids. In Xenopus tropicalis (Western clawed frog), this protein is Charged multivesicular body protein 2b (chmp2b).